The primary structure comprises 387 residues: Phosphoglycerate kinase (387 aa).

Residues 21–23, R36, and 59–62 contribute to the substrate site; these read DLN and HLGR. An N6-acetyllysine modification is found at K84. Substrate-binding residues include R113 and R146. ATP is bound by residues K197, E314, and 340–343; that span reads GGDT.

It belongs to the phosphoglycerate kinase family. In terms of assembly, monomer.

It localises to the cytoplasm. It catalyses the reaction (2R)-3-phosphoglycerate + ATP = (2R)-3-phospho-glyceroyl phosphate + ADP. The protein operates within carbohydrate degradation; glycolysis; pyruvate from D-glyceraldehyde 3-phosphate: step 2/5. The protein is Phosphoglycerate kinase (pgk) of Escherichia coli O157:H7.